A 771-amino-acid chain; its full sequence is DNA helicase/primase complex-associated protein (771 aa).

Belongs to the herpesviridae HEPA family. As to quaternary structure, associates with the primase and the helicase to form the helicase-primase complex. Interacts with the origin-binding protein. Interacts with the polymerase catalytic subunit.

It localises to the host nucleus. Its function is as follows. Component of the helicase/primase complex. Unwinds the DNA at the replication forks and generates single-stranded DNA for both leading and lagging strand synthesis. The primase synthesizes short RNA primers on the lagging strand that the polymerase presumably elongates using dNTPs. The primase-associated factor has no known catalytic activity in the complex and may serve to facilitate the formation of the replisome by directly interacting with the origin-binding protein and the polymerase. The chain is DNA helicase/primase complex-associated protein from Homo sapiens (Human).